The chain runs to 110 residues: Circadian clock oscillator protein KaiB (110 aa).

Belongs to the KaiB family. The KaiABC complex composition changes during the circadian cycle to control KaiC phosphorylation. Complexes KaiC(6), KaiA(2-4):KaiC(6), KaiB(6):KaiC(6) and KaiC(6):KaiB(6):KaiA(12) are among the most important forms, many form cooperatively. Undergoes a major conformational rearrangment; in the free state forms homotetramers as a dimer of dimers. When bound to the CI domain of KaiC switches to a monomeric thioredoxin-fold (KaiB(fs)). KaiB(fs) binds CikA, leading it to dephosphorylate phospho-RpaA.

Functionally, key component of the KaiABC oscillator complex, which constitutes the main circadian regulator in cyanobacteria. Complex composition changes during the circadian cycle to control KaiC phosphorylation. KaiA stimulates KaiC autophosphorylation, while KaiB sequesters KaiA, leading to KaiC autodephosphorylation. Phospho-Ser-431 KaiC accumulation triggers binding of KaiB to form the KaiB(6):KaiC(6) complex, leading to changes in output regulators CikA and SasA. KaiB switches to a thioredoxin-like fold (KaiB(fs)) when bound to KaiC. KaiB(6):KaiC(6) formation exposes a site for KaiA binding that sequesters KaiA from KaiC, making the KaiC(6):KaiB(6):KaiA(12) complex that results in KaiC autodephosphorylation. Its function is as follows. A metamorphic protein which reversibly switches between an inactive tetrameric fold and a rare, thioredoxin-like monomeric fold (KaiB(fs)). KaiB(fs) binds phospho-KaiC, KaiA and CikA. KaiA and CikA compete for binding to KaiB(fs), and KaiB(fs) and SasA compete for binding to KaiC, thus the clock oscillator and output signal pathway are tightly coupled. In Synechococcus sp. (strain RCC307), this protein is Circadian clock oscillator protein KaiB.